A 461-amino-acid polypeptide reads, in one-letter code: Tol-Pal system protein TolB 2 (461 aa).

A signal peptide spans 1–20 (MKIRHLLLLAGLVSAPAIVA). Positions 28–47 (SSSAAQASGDDDGGLTGSVS) are disordered.

The protein belongs to the TolB family. In terms of assembly, the Tol-Pal system is composed of five core proteins: the inner membrane proteins TolA, TolQ and TolR, the periplasmic protein TolB and the outer membrane protein Pal. They form a network linking the inner and outer membranes and the peptidoglycan layer.

Its subcellular location is the periplasm. In terms of biological role, part of the Tol-Pal system, which plays a role in outer membrane invagination during cell division and is important for maintaining outer membrane integrity. The sequence is that of Tol-Pal system protein TolB 2 from Novosphingobium aromaticivorans (strain ATCC 700278 / DSM 12444 / CCUG 56034 / CIP 105152 / NBRC 16084 / F199).